We begin with the raw amino-acid sequence, 204 residues long: Minor allergen Cla h 7 (204 aa).

One can recognise a Flavodoxin-like domain in the interval 5–195 (IAIIFYSTWG…ELTAQGKAFY (191 aa)).

This sequence belongs to the WrbA family.

It is found in the cytoplasm. The chain is Minor allergen Cla h 7 (CLAH7) from Davidiella tassiana (Mycosphaerella tassiana).